Here is a 792-residue protein sequence, read N- to C-terminus: Molybdenum cofactor sulfurase (792 aa).

Lys-246 bears the N6-(pyridoxal phosphate)lysine mark. The active site involves Cys-414. Residues Leu-646–Thr-792 form the MOSC domain. Ser-748 carries the post-translational modification Phosphoserine.

Belongs to the class-V pyridoxal-phosphate-dependent aminotransferase family. MOCOS subfamily. It depends on pyridoxal 5'-phosphate as a cofactor.

The enzyme catalyses Mo-molybdopterin + L-cysteine + AH2 = thio-Mo-molybdopterin + L-alanine + A + H2O. The protein operates within cofactor biosynthesis; molybdopterin biosynthesis. Its function is as follows. Sulfurates the molybdenum cofactor. Sulfation of molybdenum is essential for xanthine dehydrogenase (XDH) and aldehyde oxidase (ADO) enzymes in which molybdenum cofactor is liganded by 1 oxygen and 1 sulfur atom in active form. The chain is Molybdenum cofactor sulfurase from Drosophila pseudoobscura pseudoobscura (Fruit fly).